Reading from the N-terminus, the 459-residue chain is Cysteine--tRNA ligase (459 aa).

Residue Cys28 participates in Zn(2+) binding. A 'HIGH' region motif is present at residues 30–40 (ITIYDYCHIGH). 3 residues coordinate Zn(2+): Cys209, His234, and Glu238. A 'KMSKS' region motif is present at residues 266 to 270 (KMSKS). Residue Lys269 participates in ATP binding.

The protein belongs to the class-I aminoacyl-tRNA synthetase family. Monomer. Requires Zn(2+) as cofactor.

The protein localises to the cytoplasm. The catalysed reaction is tRNA(Cys) + L-cysteine + ATP = L-cysteinyl-tRNA(Cys) + AMP + diphosphate. The polypeptide is Cysteine--tRNA ligase (Pseudoalteromonas translucida (strain TAC 125)).